Reading from the N-terminus, the 325-residue chain is MAEGLVLRGTMRAHTDVVTAIATPIDNSDMIVTASRDKSIILWHLTKEDKTYGVPRRRLTGHSHFVQDVVLSSDGQFALSGSWDGELRLWDLNAGTSARRFVGHTKDVLSVAFSIDNRQIVSASRDRTIKLWNTLGECKYTIQDGDAHSDWVSCVRFSPSTPQPTIVSASWDRTVKVWNLTNCKLRNTLAGHSGYVNTVAVSPDGSLCASGGKDGVILLWDLAEGKRLYSLDAGSIIHALCFSPNRYWLCAATESSIKIWDLESKSIVEDLKVDLKTEADAAIGGDTTTKKKVIYCTSLNWSADGSTLFSGYTDGVVRVWGIGRY.

7 WD repeats span residues 13-44 (AHTD…ILWH), 61-91 (GHSH…RLWD), 103-133 (GHTK…KLWN), 147-179 (AHSD…KVWN), 191-221 (GHSG…LLWD), 232-261 (DAGS…KIWD), and 291-321 (KKVI…RVWG).

It belongs to the WD repeat G protein beta family. Ribosomal protein RACK1 subfamily.

Its function is as follows. Plays a role in hormone-mediated cell division. The polypeptide is Small ribosomal subunit protein RACK1 (GB1) (Medicago sativa (Alfalfa)).